The primary structure comprises 225 residues: PKHD-type hydroxylase YbiX (225 aa).

Residues 78–177 form the Fe2OG dioxygenase domain; the sequence is TLSTPLFNRY…RVASFMWIQS (100 aa). Fe cation contacts are provided by H96, D98, and H158. Residue R168 coordinates 2-oxoglutarate.

It depends on Fe(2+) as a cofactor. L-ascorbate is required as a cofactor.

The sequence is that of PKHD-type hydroxylase YbiX from Escherichia coli O45:K1 (strain S88 / ExPEC).